Consider the following 204-residue polypeptide: Protein GrpE (204 aa).

The tract at residues 1-52 is disordered; the sequence is MSSKNNPESETKAKNKWEKVMEAEEEQEEGGGDGSQEMEPHREGLEFPSREK. Basic and acidic residues-rich tracts occupy residues 7–22 and 38–52; these read PESE…KVME and MEPH…SREK.

The protein belongs to the GrpE family. Homodimer.

It is found in the cytoplasm. In terms of biological role, participates actively in the response to hyperosmotic and heat shock by preventing the aggregation of stress-denatured proteins, in association with DnaK and GrpE. It is the nucleotide exchange factor for DnaK and may function as a thermosensor. Unfolded proteins bind initially to DnaJ; upon interaction with the DnaJ-bound protein, DnaK hydrolyzes its bound ATP, resulting in the formation of a stable complex. GrpE releases ADP from DnaK; ATP binding to DnaK triggers the release of the substrate protein, thus completing the reaction cycle. Several rounds of ATP-dependent interactions between DnaJ, DnaK and GrpE are required for fully efficient folding. The chain is Protein GrpE from Coxiella burnetii (strain Dugway 5J108-111).